Reading from the N-terminus, the 201-residue chain is Recombination protein RecR (201 aa).

The segment at 60 to 75 adopts a C4-type zinc-finger fold; it reads CSVCGNIDTTDPCSIC. Positions 83-178 constitute a Toprim domain; the sequence is GTIIVVEDIS…KITRLAHGVP (96 aa).

Belongs to the RecR family.

Functionally, may play a role in DNA repair. It seems to be involved in an RecBC-independent recombinational process of DNA repair. It may act with RecF and RecO. This Bartonella bacilliformis (strain ATCC 35685 / KC583 / Herrer 020/F12,63) protein is Recombination protein RecR.